The following is a 98-amino-acid chain: Integration host factor subunit beta (98 aa).

The protein belongs to the bacterial histone-like protein family. Heterodimer of an alpha and a beta chain.

This protein is one of the two subunits of integration host factor, a specific DNA-binding protein that functions in genetic recombination as well as in transcriptional and translational control. This Teredinibacter turnerae (strain ATCC 39867 / T7901) protein is Integration host factor subunit beta.